The following is a 1078-amino-acid chain: mRNA 3'-end-processing protein rna14 (1078 aa).

Disordered stretches follow at residues 15–209 (AMNA…DTPA) and 222–251 (QSENMQDSAAATPVPDSPSTSKGRLPHDRV). Over residues 42 to 55 (KTLQDQYSASILDS) the composition is skewed to polar residues. Residues 58-68 (SEIAPSSASPS) are compositionally biased toward low complexity. Residues 82–115 (DPSQPADSAYPSQTPSRADSQASVSAPASGTSVP) are compositionally biased toward polar residues. Residues 126–139 (VEDEDEDDAGDADY) are compositionally biased toward acidic residues. Composition is skewed to polar residues over residues 151–170 (NTISMNVPQQPISGNANEDT) and 190–206 (FPNSSYTPASAAASKSD). 6 HAT repeats span residues 280–312 (NRIDSAREVYERFLTAFPFSAEQWVAYATMESE), 314–345 (NELYRLEQIFNRTLLTIPDVQLWTVYLDYVRR), 356–391 (QSRRIISSAYDLALQYVGVDKDSGSIWTDYVQFIRS), 405–438 (QKMDLLRKAYQKAICVPTQAVNNLWKEYDQFEMG), 475–508 (TTLPRLPPVLGSDGDIEFGQQVDIWKRWIKWEKG), and 520–552 (AFKARVIYVYKQALMALRFLPEIWFEAAEFCFL). 2 disordered regions span residues 632–663 (ETFAKINPDTQPSKTDDDDDDQSDSKARESMK) and 851–950 (PTVV…QGSP). Over residues 879 to 894 (GTPSSRYPDASVTNSP) the composition is skewed to polar residues. The segment covering 896–907 (RPLEDFDDEMNR) has biased composition (basic and acidic residues). Residues 931-949 (RTQQVISNQTGSQFRSQGS) are compositionally biased toward polar residues.

The protein resides in the nucleus. It localises to the cytoplasm. Functionally, component of the cleavage factor IA (CFIA) complex, which is involved in the endonucleolytic cleavage during polyadenylation-dependent pre-mRNA 3'-end formation. This is mRNA 3'-end-processing protein rna14 (rna14) from Aspergillus oryzae (strain ATCC 42149 / RIB 40) (Yellow koji mold).